Consider the following 228-residue polypeptide: Sec-independent protein translocase protein TatB (228 aa).

The chain crosses the membrane as a helical span at residues 1–21; that stretch reads MFDFGLGELVFVGIIALIVLG. 2 disordered regions span residues 126 to 162 and 196 to 228; these read LSDGISDVMPSERSDTSAEILGDSGQTGSTAEPAETD and VPHTTSLRKQAISRKRGLRPKHRAKPKLRVRKS. Basic residues predominate over residues 206–228; sequence AISRKRGLRPKHRAKPKLRVRKS.

It belongs to the TatB family. As to quaternary structure, the Tat system comprises two distinct complexes: a TatABC complex, containing multiple copies of TatA, TatB and TatC subunits, and a separate TatA complex, containing only TatA subunits. Substrates initially bind to the TatABC complex, which probably triggers association of the separate TatA complex to form the active translocon.

Its subcellular location is the cell inner membrane. Part of the twin-arginine translocation (Tat) system that transports large folded proteins containing a characteristic twin-arginine motif in their signal peptide across membranes. Together with TatC, TatB is part of a receptor directly interacting with Tat signal peptides. TatB may form an oligomeric binding site that transiently accommodates folded Tat precursor proteins before their translocation. This is Sec-independent protein translocase protein TatB from Neisseria meningitidis serogroup C / serotype 2a (strain ATCC 700532 / DSM 15464 / FAM18).